A 574-amino-acid polypeptide reads, in one-letter code: Sulfate adenylyltransferase (574 aa).

The segment at 1–169 (MANPPHGGVL…IEAINKLNHY (169 aa)) is N-terminal. A catalytic region spans residues 170–394 (DYVALRYTPA…LRESSPPRHT (225 aa)). Gln197 contributes to the sulfate binding site. Residues 197 to 200 (QTRN) and 291 to 294 (GRDH) contribute to the ATP site. Catalysis depends on residues Thr198, Arg199, and Asn200. Arg199 is a binding site for sulfate. Ala295 provides a ligand contact to sulfate. Val333 serves as a coordination point for ATP. Positions 395 to 574 (QGFTIFLTGY…LETEGFFDRS (180 aa)) are allosteric regulation domain; adenylyl-sulfate kinase-like. Residues 434–437 (DTVR), Arg451, 477–478 (IA), and Arg516 contribute to the 3'-phosphoadenylyl sulfate site.

In the N-terminal section; belongs to the sulfate adenylyltransferase family. It in the C-terminal section; belongs to the APS kinase family. Homohexamer. Dimer of trimers.

Its subcellular location is the cytoplasm. The catalysed reaction is sulfate + ATP + H(+) = adenosine 5'-phosphosulfate + diphosphate. It participates in sulfur metabolism; hydrogen sulfide biosynthesis; sulfite from sulfate: step 1/3. Its activity is regulated as follows. Allosterically inhibited by 3'-phosphoadenosine 5'-phosphosulfate (PAPS). Functionally, catalyzes the first intracellular reaction of sulfate assimilation, forming adenosine-5'-phosphosulfate (APS) from inorganic sulfate and ATP. Plays an important role in sulfate activation as a component of the biosynthesis pathway of sulfur-containing amino acids. This is Sulfate adenylyltransferase from Neosartorya fischeri (strain ATCC 1020 / DSM 3700 / CBS 544.65 / FGSC A1164 / JCM 1740 / NRRL 181 / WB 181) (Aspergillus fischerianus).